Reading from the N-terminus, the 332-residue chain is Fructose-1,6-bisphosphatase class 1 1 (332 aa).

4 residues coordinate Mg(2+): E92, D115, L117, and D118. Residues 118–121 (DGSS), N211, Y244, 262–264 (YLY), and K274 contribute to the substrate site. A Mg(2+)-binding site is contributed by E280.

This sequence belongs to the FBPase class 1 family. Homotetramer. Mg(2+) is required as a cofactor.

It is found in the cytoplasm. The catalysed reaction is beta-D-fructose 1,6-bisphosphate + H2O = beta-D-fructose 6-phosphate + phosphate. Its pathway is carbohydrate biosynthesis; gluconeogenesis. The polypeptide is Fructose-1,6-bisphosphatase class 1 1 (Christiangramia forsetii (strain DSM 17595 / CGMCC 1.15422 / KT0803) (Gramella forsetii)).